Reading from the N-terminus, the 308-residue chain is Ribonuclease 3 (308 aa).

The RNase III domain occupies Tyr-20–Gly-145. Glu-62 provides a ligand contact to Mg(2+). Asp-66 is a catalytic residue. Mg(2+)-binding residues include Asn-131 and Glu-134. Glu-134 is an active-site residue. The DRBM domain maps to Asn-173–Asn-242. The segment at Gln-261–Leu-281 is disordered.

It belongs to the ribonuclease III family. Homodimer. The cofactor is Mg(2+).

It localises to the cytoplasm. The enzyme catalyses Endonucleolytic cleavage to 5'-phosphomonoester.. Functionally, digests double-stranded RNA. Involved in the processing of primary rRNA transcript to yield the immediate precursors to the large and small rRNAs (23S and 16S). Processes some mRNAs, and tRNAs when they are encoded in the rRNA operon. Processes pre-crRNA and tracrRNA of type II CRISPR loci if present in the organism. The protein is Ribonuclease 3 of Phocaeicola vulgatus (strain ATCC 8482 / DSM 1447 / JCM 5826 / CCUG 4940 / NBRC 14291 / NCTC 11154) (Bacteroides vulgatus).